The primary structure comprises 172 residues: Female-specific lacrimal gland protein (172 aa).

A signal peptide spans 1-16 (MVKFLLLALALGVSCA). Cystine bridges form between Cys-60-Cys-64 and Cys-79-Cys-170.

Belongs to the calycin superfamily. Lipocalin family. As to expression, expressed in the lacrimal gland from where it is secreted into tears (at protein level).

The protein resides in the secreted. This Mesocricetus auratus (Golden hamster) protein is Female-specific lacrimal gland protein.